We begin with the raw amino-acid sequence, 436 residues long: Histidine--tRNA ligase (436 aa).

This sequence belongs to the class-II aminoacyl-tRNA synthetase family. In terms of assembly, homodimer.

Its subcellular location is the cytoplasm. The enzyme catalyses tRNA(His) + L-histidine + ATP = L-histidyl-tRNA(His) + AMP + diphosphate + H(+). This chain is Histidine--tRNA ligase, found in Psychrobacter sp. (strain PRwf-1).